The sequence spans 197 residues: Phosphoheptose isomerase (197 aa).

The region spanning 34–196 (MVNCLLGGNK…DRTLFPQDEQ (163 aa)) is the SIS domain. 49–51 (NGG) is a substrate binding site. Residues His58 and Glu62 each contribute to the Zn(2+) site. Residues Glu62, 91–92 (ND), 117–119 (STS), Ser122, and Gln172 each bind substrate. 2 residues coordinate Zn(2+): Gln172 and His180.

Belongs to the SIS family. GmhA subfamily. As to quaternary structure, homotetramer. Requires Zn(2+) as cofactor.

The protein localises to the cytoplasm. The catalysed reaction is 2 D-sedoheptulose 7-phosphate = D-glycero-alpha-D-manno-heptose 7-phosphate + D-glycero-beta-D-manno-heptose 7-phosphate. It participates in carbohydrate biosynthesis; D-glycero-D-manno-heptose 7-phosphate biosynthesis; D-glycero-alpha-D-manno-heptose 7-phosphate and D-glycero-beta-D-manno-heptose 7-phosphate from sedoheptulose 7-phosphate: step 1/1. Catalyzes the isomerization of sedoheptulose 7-phosphate in D-glycero-D-manno-heptose 7-phosphate. The polypeptide is Phosphoheptose isomerase (Shewanella pealeana (strain ATCC 700345 / ANG-SQ1)).